A 383-amino-acid polypeptide reads, in one-letter code: Chaperone protein DnaJ (383 aa).

The 65-residue stretch at 6–70 folds into the J domain; it reads DYYDVLGVGR…QKRAAYDQYG (65 aa). The CR-type zinc-finger motif lies at 140–222; sequence GKETKISYSR…CHGTGREEER (83 aa). The Zn(2+) site is built by C153, C156, C170, C173, C196, C199, C210, and C213. CXXCXGXG motif repeat units follow at residues 153–160, 170–177, 196–203, and 210–217; these read CHTCHGSG, CHKCHGAG, CDVCGGTG, and CDTCHGTG.

It belongs to the DnaJ family. Homodimer. The cofactor is Zn(2+).

The protein localises to the cytoplasm. Functionally, participates actively in the response to hyperosmotic and heat shock by preventing the aggregation of stress-denatured proteins and by disaggregating proteins, also in an autonomous, DnaK-independent fashion. Unfolded proteins bind initially to DnaJ; upon interaction with the DnaJ-bound protein, DnaK hydrolyzes its bound ATP, resulting in the formation of a stable complex. GrpE releases ADP from DnaK; ATP binding to DnaK triggers the release of the substrate protein, thus completing the reaction cycle. Several rounds of ATP-dependent interactions between DnaJ, DnaK and GrpE are required for fully efficient folding. Also involved, together with DnaK and GrpE, in the DNA replication of plasmids through activation of initiation proteins. This is Chaperone protein DnaJ from Latilactobacillus sakei (Lactobacillus sakei).